The chain runs to 351 residues: UDP-N-acetylglucosamine--N-acetylmuramyl-(pentapeptide) pyrophosphoryl-undecaprenol N-acetylglucosamine transferase (351 aa).

UDP-N-acetyl-alpha-D-glucosamine contacts are provided by residues 13–15 (TGG), Asn125, Arg161, Ser189, Ile241, 260–265 (ALTVCE), and Gln285.

The protein belongs to the glycosyltransferase 28 family. MurG subfamily.

Its subcellular location is the cell inner membrane. The enzyme catalyses di-trans,octa-cis-undecaprenyl diphospho-N-acetyl-alpha-D-muramoyl-L-alanyl-D-glutamyl-meso-2,6-diaminopimeloyl-D-alanyl-D-alanine + UDP-N-acetyl-alpha-D-glucosamine = di-trans,octa-cis-undecaprenyl diphospho-[N-acetyl-alpha-D-glucosaminyl-(1-&gt;4)]-N-acetyl-alpha-D-muramoyl-L-alanyl-D-glutamyl-meso-2,6-diaminopimeloyl-D-alanyl-D-alanine + UDP + H(+). It functions in the pathway cell wall biogenesis; peptidoglycan biosynthesis. In terms of biological role, cell wall formation. Catalyzes the transfer of a GlcNAc subunit on undecaprenyl-pyrophosphoryl-MurNAc-pentapeptide (lipid intermediate I) to form undecaprenyl-pyrophosphoryl-MurNAc-(pentapeptide)GlcNAc (lipid intermediate II). The polypeptide is UDP-N-acetylglucosamine--N-acetylmuramyl-(pentapeptide) pyrophosphoryl-undecaprenol N-acetylglucosamine transferase (Haemophilus influenzae (strain 86-028NP)).